The chain runs to 190 residues: UPF0301 protein PSPTO_5037 (190 aa).

It belongs to the UPF0301 (AlgH) family.

The polypeptide is UPF0301 protein PSPTO_5037 (Pseudomonas syringae pv. tomato (strain ATCC BAA-871 / DC3000)).